The following is a 119-amino-acid chain: UPF0102 protein FN1370 (119 aa).

It belongs to the UPF0102 family.

The protein is UPF0102 protein FN1370 of Fusobacterium nucleatum subsp. nucleatum (strain ATCC 25586 / DSM 15643 / BCRC 10681 / CIP 101130 / JCM 8532 / KCTC 2640 / LMG 13131 / VPI 4355).